The following is a 448-amino-acid chain: UDP-N-acetylmuramoylalanine--D-glutamate ligase (448 aa).

112–118 (GSNAKST) serves as a coordination point for ATP.

The protein belongs to the MurCDEF family.

Its subcellular location is the cytoplasm. The catalysed reaction is UDP-N-acetyl-alpha-D-muramoyl-L-alanine + D-glutamate + ATP = UDP-N-acetyl-alpha-D-muramoyl-L-alanyl-D-glutamate + ADP + phosphate + H(+). It functions in the pathway cell wall biogenesis; peptidoglycan biosynthesis. Cell wall formation. Catalyzes the addition of glutamate to the nucleotide precursor UDP-N-acetylmuramoyl-L-alanine (UMA). The polypeptide is UDP-N-acetylmuramoylalanine--D-glutamate ligase (Acinetobacter baylyi (strain ATCC 33305 / BD413 / ADP1)).